We begin with the raw amino-acid sequence, 136 residues long: Small ribosomal subunit protein uS9 (136 aa).

A disordered region spans residues 115-136; the sequence is KVKERKKPGLRKARKARQFSKR. Residues 117–136 show a composition bias toward basic residues; it reads KERKKPGLRKARKARQFSKR.

Belongs to the universal ribosomal protein uS9 family.

In Mycoplasmopsis pulmonis (strain UAB CTIP) (Mycoplasma pulmonis), this protein is Small ribosomal subunit protein uS9.